The primary structure comprises 730 residues: ABC transporter G family member 20 (730 aa).

The ABC transporter domain occupies 15 to 244 (ISLKNVCRGY…YESQTLEEVF (230 aa)). 47–54 (GASGSGKT) lines the ATP pocket. A disordered region spans residues 281–303 (VNNNNNNNNNNNNNNYNNNDDEE). Low complexity predominate over residues 282–298 (NNNNNNNNNNNNNNYNN). The 229-residue stretch at 489–717 (SFETLAKQQA…FIAVLALNEK (229 aa)) folds into the ABC transmembrane type-2 domain. Transmembrane regions (helical) follow at residues 520-540 (FIDF…AISI), 572-592 (FLGH…IAIY), 602-622 (IALV…LGLV), 634-654 (IQLS…LWPL), and 692-712 (VWVA…IAVL).

This sequence belongs to the ABC transporter superfamily.

It is found in the membrane. The chain is ABC transporter G family member 20 (abcG20) from Dictyostelium discoideum (Social amoeba).